Here is a 218-residue protein sequence, read N- to C-terminus: GCN5-related N-acetyltransferase 9 (218 aa).

The N-acetyltransferase domain maps to Ser-36 to Thr-183. Acetyl-CoA is bound by residues Met-112–Ala-114, Gly-120–Lys-125, Asn-152–Ala-154, and Phe-159.

It belongs to the acetyltransferase family. GNAT subfamily. In terms of assembly, oligomer. Expressed throughout the plant.

It is found in the cytoplasm. Its subcellular location is the nucleus. It carries out the reaction an N-terminal L-alpha-aminoacyl-[protein] + acetyl-CoA = N-terminal N(alpha)-acetyl-L-alpha-aminoacyl-[protein] + CoA + H(+). The enzyme catalyses L-lysyl-[protein] + acetyl-CoA = N(6)-acetyl-L-lysyl-[protein] + CoA + H(+). Probable protein acetyltransferase with dual specificity triggering both N-alpha-acetylation (NTA) and epsilon-lysine acetylation (KA). The sequence is that of GCN5-related N-acetyltransferase 9 from Arabidopsis thaliana (Mouse-ear cress).